A 709-amino-acid polypeptide reads, in one-letter code: Polyribonucleotide nucleotidyltransferase (709 aa).

Asp487 and Asp493 together coordinate Mg(2+). The KH domain occupies 554–613; the sequence is PRIHTMKISVEKIKDVIGKGGAVIRQLTEETGTTIEIEDDGTIKIAATDGDQAKEAIRRI. In terms of domain architecture, S1 motif spans 623 to 691; the sequence is GVIYTGKVAR…RQGRVRLSMK (69 aa).

This sequence belongs to the polyribonucleotide nucleotidyltransferase family. As to quaternary structure, component of the RNA degradosome, which is a multiprotein complex involved in RNA processing and mRNA degradation. The cofactor is Mg(2+).

It localises to the cytoplasm. The catalysed reaction is RNA(n+1) + phosphate = RNA(n) + a ribonucleoside 5'-diphosphate. Involved in mRNA degradation. Catalyzes the phosphorolysis of single-stranded polyribonucleotides processively in the 3'- to 5'-direction. The chain is Polyribonucleotide nucleotidyltransferase from Vibrio cholerae serotype O1 (strain ATCC 39315 / El Tor Inaba N16961).